The following is an 86-amino-acid chain: MSGIKFYLVKGTALFGESHYPEKRKFVKIVRALNEKQAIEYVYSHFGSKNKIKRYNIKIEQISEIKEEEIPDRRIRELAKVDKIIM.

It belongs to the eukaryotic ribosomal protein eL20 family. As to quaternary structure, part of the 50S ribosomal subunit. Binds 23S rRNA.

The polypeptide is Large ribosomal subunit protein eL20 (Saccharolobus solfataricus (strain ATCC 35092 / DSM 1617 / JCM 11322 / P2) (Sulfolobus solfataricus)).